Reading from the N-terminus, the 430-residue chain is Gustatory receptor-like 43a (430 aa).

Residues 1–31 (MSTGSHSPEAMWSATNFRRHQRKPNQVLHRW) lie on the Cytoplasmic side of the membrane. A helical membrane pass occupies residues 32–52 (FFKGSAWIIYAIACGLHFFKL). The Extracellular segment spans residues 53–79 (HYNERTNQVEESQYHRIWSKIVVVLKV). Residues 80–100 (ILLASPYLQYFVLGLGIYIHI) form a helical membrane-spanning segment. The Cytoplasmic portion of the chain corresponds to 101-110 (TLVQDSKAQN). Residues 111-131 (FLMSLIVLGIVIGVLRRLLIF) form a helical membrane-spanning segment. Over 132–168 (LHLKRDRRFLKHTVNEILHITSALEQKFGMEYKCDST) the chain is Extracellular. The helical transmembrane segment at 169–189 (LLVVYLAKLWILTVMLDSLWY) threads the bilayer. Residues 190-277 (KPYFLSSIFL…RDNVSWLSTS (88 aa)) lie on the Cytoplasmic side of the membrane. A helical transmembrane segment spans residues 278–298 (VYLMIFTCIFNAELLIECSLF). The Extracellular segment spans residues 299-306 (AGDELENK). A helical transmembrane segment spans residues 307–327 (IYIITDGCLGPVCVPILYVLI). Topologically, residues 328 to 396 (LGMCTDRFRD…IILDITCDRE (69 aa)) are cytoplasmic. A helical membrane pass occupies residues 397–417 (FVMDYIVTVILTALSLVQYTI). Over 418–430 (STGGNISECVTHK) the chain is Extracellular. A glycan (N-linked (GlcNAc...) asparagine) is linked at Asn422.

It localises to the cell membrane. The protein is Gustatory receptor-like 43a of Drosophila melanogaster (Fruit fly).